A 508-amino-acid chain; its full sequence is Maturase K (508 aa).

It belongs to the intron maturase 2 family. MatK subfamily.

Its subcellular location is the plastid. The protein resides in the chloroplast. In terms of biological role, usually encoded in the trnK tRNA gene intron. Probably assists in splicing its own and other chloroplast group II introns. This Gordonia lasianthus (Loblolly bay) protein is Maturase K.